A 139-amino-acid chain; its full sequence is Large ribosomal subunit protein uL13 (139 aa).

This sequence belongs to the universal ribosomal protein uL13 family. In terms of assembly, part of the 50S ribosomal subunit.

In terms of biological role, this protein is one of the early assembly proteins of the 50S ribosomal subunit, although it is not seen to bind rRNA by itself. It is important during the early stages of 50S assembly. This Methanococcoides burtonii (strain DSM 6242 / NBRC 107633 / OCM 468 / ACE-M) protein is Large ribosomal subunit protein uL13.